A 1133-amino-acid polypeptide reads, in one-letter code: Roquin-1 (1133 aa).

Zn(2+) is bound by residues Cys14, Cys17, Cys33, His35, Cys38, Cys50, and Asp53. The RING-type; degenerate zinc-finger motif lies at 14-54; that stretch reads CPICTQTFDETIRKPISLGCGHTVCKMCLNKLHRKACPFDQ. The HEPN-N stretch occupies residues 89–173; that stretch reads GVEDTKHYEE…RTVTELILQH (85 aa). Positions 174–326 are ROQ; that stretch reads QNPQQLSSNL…MQSIIDKLQT (153 aa). The segment at 327–396 is HEPN-C; that stretch reads PASFAQSVQE…VVHGLVDYIQ (70 aa). A C3H1-type zinc finger spans residues 413 to 441; sequence KYKTYMCRDMKQRGGCPRGASCTFAHSQE. A phosphoserine mark is found at Ser462, Ser531, Ser535, and Ser863. A disordered region spans residues 505–542; it reads TQLIPRGTDPSYDSSLKPGKIDHLSSSAPGSPPDLLES. 3 disordered regions span residues 1000–1019, 1058–1078, and 1094–1133; these read NTLAGQSQPPPPPPPKWPGM, NTSKQAENGQPEPQNKVPAED, and QENISLLSNKTSSLNLSEDPEGGGDNNDSQRSGVTPSSAP. A compositionally biased stretch (pro residues) spans 1007–1016; that stretch reads QPPPPPPPKW. Residues 1058 to 1070 are compositionally biased toward polar residues; it reads NTSKQAENGQPEP. Over residues 1096-1110 the composition is skewed to low complexity; it reads NISLLSNKTSSLNLS. Position 1110 is a phosphoserine (Ser1110). A compositionally biased stretch (polar residues) spans 1119–1133; that stretch reads NNDSQRSGVTPSSAP.

As to quaternary structure, able to homodimerize. Interacts with DDX6 and EDC4. Interacts with CCR4-NOT deadenylase complex. Interacts with RC3H1; the interaction is RNA independent. In terms of processing, proteolytically cleaved after Arg-510 and Arg-579 by MALT1 in activated CD4(+) T cells; cleavage at Arg-510 and Arg-579 is critical for promoting RC3H1 degradation in response to T-cell receptor (TCR) stimulation, and hence is necessary for prolonging the stability of a set of mRNAs controlling Th17 cell differentiation. As to expression, widely expressed. Expressed at higher level in cerebellum, spleen, ovary and liver.

It localises to the cytoplasm. It is found in the P-body. The protein resides in the cytoplasmic granule. The catalysed reaction is S-ubiquitinyl-[E2 ubiquitin-conjugating enzyme]-L-cysteine + [acceptor protein]-L-lysine = [E2 ubiquitin-conjugating enzyme]-L-cysteine + N(6)-ubiquitinyl-[acceptor protein]-L-lysine.. The protein operates within protein modification; protein ubiquitination. Its function is as follows. Post-transcriptional repressor of mRNAs containing a conserved stem loop motif, called constitutive decay element (CDE), which is often located in the 3'-UTR, as in HMGXB3, ICOS, IER3, NFKBID, NFKBIZ, PPP1R10, TNF, TNFRSF4 and in many more mRNAs. Cleaves translationally inactive mRNAs harboring a stem-loop (SL), often located in their 3'-UTRs, during the early phase of inflammation in a helicase UPF1-independent manner. Binds to CDE and promotes mRNA deadenylation and degradation. This process does not involve miRNAs. In follicular helper T (Tfh) cells, represses of ICOS and TNFRSF4 expression, thus preventing spontaneous Tfh cell differentiation, germinal center B-cell differentiation in the absence of immunization and autoimmunity. In resting or LPS-stimulated macrophages, controls inflammation by suppressing TNF expression. Also recognizes CDE in its own mRNA and in that of paralogous RC3H2, possibly leading to feedback loop regulation. Recognizes and binds mRNAs containing a hexaloop stem-loop motif, called alternative decay element (ADE). Together with ZC3H12A, destabilizes TNFRSF4/OX40 mRNA by binding to the conserved stem loop structure in its 3'UTR. Able to interact with double-stranded RNA (dsRNA). miRNA-binding protein that regulates microRNA homeostasis. Enhances DICER-mediated processing of pre-MIR146a but reduces mature MIR146a levels through an increase of 3' end uridylation. Both inhibits ICOS mRNA expression and they may act together to exert the suppression. Acts as a ubiquitin E3 ligase. Pairs with E2 enzymes UBE2A, UBE2B, UBE2D2, UBE2F, UBE2G1, UBE2G2 and UBE2L3 and produces polyubiquitin chains. Shows the strongest activity when paired with UBE2N:UBE2V1 or UBE2N:UBE2V2 E2 complexes and generate both short and long polyubiquitin chains. This chain is Roquin-1, found in Homo sapiens (Human).